The primary structure comprises 454 residues: uncharacterized protein (454 aa).

It belongs to the outer membrane factor (OMF) (TC 1.B.17) family.

This is an uncharacterized protein from Haemophilus influenzae (strain ATCC 51907 / DSM 11121 / KW20 / Rd).